The sequence spans 427 residues: Histidinol dehydrogenase (427 aa).

Substrate contacts are provided by Ser-232, Gln-254, and His-257. Residues Gln-254 and His-257 each coordinate Zn(2+). Active-site proton acceptor residues include Glu-322 and His-323. Substrate-binding residues include His-323, Asp-356, Glu-410, and His-415. A Zn(2+)-binding site is contributed by Asp-356. A Zn(2+)-binding site is contributed by His-415.

This sequence belongs to the histidinol dehydrogenase family. The cofactor is Zn(2+).

The enzyme catalyses L-histidinol + 2 NAD(+) + H2O = L-histidine + 2 NADH + 3 H(+). The protein operates within amino-acid biosynthesis; L-histidine biosynthesis; L-histidine from 5-phospho-alpha-D-ribose 1-diphosphate: step 9/9. Its function is as follows. Catalyzes the sequential NAD-dependent oxidations of L-histidinol to L-histidinaldehyde and then to L-histidine. This chain is Histidinol dehydrogenase, found in Listeria monocytogenes serotype 4b (strain F2365).